A 212-amino-acid polypeptide reads, in one-letter code: Placenta-specific protein 1 (212 aa).

Residues Met1 to Gly22 form the signal peptide.

The protein belongs to the PLAC1 family. Expressed in placenta. Localizes primarily to differentiated syncytiotrophoblast throughout gestation as well as to a small population of villous cytotrophoblasts. Also detected in maternal blood and rapidly disappears following delivery, but is not detected in other adult or fetal tissues examined.

The protein localises to the secreted. In terms of biological role, may play a role in placental development. This is Placenta-specific protein 1 from Homo sapiens (Human).